The primary structure comprises 280 residues: Phosphatidylglycerol--prolipoprotein diacylglyceryl transferase (280 aa).

The next 3 membrane-spanning stretches (helical) occupy residues 19–39 (LSVR…YFVA), 56–76 (IIFY…VIFQ), and 90–110 (IWHG…AGVI). Position 138 (arginine 138) interacts with a 1,2-diacyl-sn-glycero-3-phospho-(1'-sn-glycerol). 2 helical membrane passes run 204–224 (LGET…FIEG) and 236–256 (IRVA…LIVY).

This sequence belongs to the Lgt family.

The protein resides in the cell membrane. It catalyses the reaction L-cysteinyl-[prolipoprotein] + a 1,2-diacyl-sn-glycero-3-phospho-(1'-sn-glycerol) = an S-1,2-diacyl-sn-glyceryl-L-cysteinyl-[prolipoprotein] + sn-glycerol 1-phosphate + H(+). It functions in the pathway protein modification; lipoprotein biosynthesis (diacylglyceryl transfer). In terms of biological role, catalyzes the transfer of the diacylglyceryl group from phosphatidylglycerol to the sulfhydryl group of the N-terminal cysteine of a prolipoprotein, the first step in the formation of mature lipoproteins. This Staphylococcus aureus (strain MRSA252) protein is Phosphatidylglycerol--prolipoprotein diacylglyceryl transferase.